The primary structure comprises 102 residues: PE family immunomodulator PE15 (102 aa).

A PE domain is found at 3–91; that stretch reads LRVVPESLAG…SGASYAARDA (89 aa).

The protein belongs to the mycobacterial PE family.

It localises to the secreted. The protein resides in the cell envelope. It is found in the cell surface. Its function is as follows. May play a pivotal role in the evasion of host immune response by M.tuberculosis. Mediates production of IL-10 via activation of the p38 and ERK1/2 mitogen-activated protein kinase (MAPK) signaling pathways. The sequence is that of PE family immunomodulator PE15 (PE15) from Mycobacterium tuberculosis (strain CDC 1551 / Oshkosh).